Consider the following 89-residue polypeptide: UPF0297 protein SMU_2079c (89 aa).

Belongs to the UPF0297 family.

This is UPF0297 protein SMU_2079c from Streptococcus mutans serotype c (strain ATCC 700610 / UA159).